A 302-amino-acid polypeptide reads, in one-letter code: Acetylglutamate kinase (302 aa).

Residues 67–68 (GG), Arg89, and Asn194 contribute to the substrate site.

The protein belongs to the acetylglutamate kinase family. ArgB subfamily.

The protein resides in the cytoplasm. The enzyme catalyses N-acetyl-L-glutamate + ATP = N-acetyl-L-glutamyl 5-phosphate + ADP. Its pathway is amino-acid biosynthesis; L-arginine biosynthesis; N(2)-acetyl-L-ornithine from L-glutamate: step 2/4. Its function is as follows. Catalyzes the ATP-dependent phosphorylation of N-acetyl-L-glutamate. The protein is Acetylglutamate kinase of Hahella chejuensis (strain KCTC 2396).